Consider the following 377-residue polypeptide: Bacterial actin-related protein (377 aa).

This sequence belongs to the actin family.

Its function is as follows. May be a dominant-negative inhibitor of eukaryotic actin polymerization. In Haliangium ochraceum (strain DSM 14365 / JCM 11303 / SMP-2), this protein is Bacterial actin-related protein (barP).